Consider the following 420-residue polypeptide: Dihydrolipoyllysine-residue succinyltransferase component of 2-oxoglutarate dehydrogenase complex (420 aa).

One can recognise a Lipoyl-binding domain in the interval 1-76 (MAEVKVPELA…EVGQAVAVVG (76 aa)). At lysine 42 the chain carries N6-lipoyllysine. Residues 75 to 199 (VGEGQVNTSN…IREKMSRRKK (125 aa)) form a disordered region. Residues 81–90 (NTSNDSSNES) are compositionally biased toward polar residues. Residues 91 to 102 (SQKDEAKEKETP) are compositionally biased toward basic and acidic residues. The segment covering 103–127 (KQSNPNSSESENTQDNSQQRINATP) has biased composition (polar residues). The 37-residue stretch at 124–160 (NATPSARRHARKNGVDLSEVSGKGNDVLRKDDVENSQ) folds into the Peripheral subunit-binding (PSBD) domain. A compositionally biased stretch (basic and acidic residues) spans 149 to 158 (DVLRKDDVEN). The span at 159–174 (SQKSSSQTAKSESKSQ) shows a compositional bias: low complexity. Polar residues predominate over residues 175–186 (NSGSKQTNNNPS). Active-site residues include histidine 391 and aspartate 395.

This sequence belongs to the 2-oxoacid dehydrogenase family. As to quaternary structure, forms a 24-polypeptide structural core with octahedral symmetry. Part of the 2-oxoglutarate dehydrogenase (OGDH) complex composed of E1 (2-oxoglutarate dehydrogenase), E2 (dihydrolipoamide succinyltransferase) and E3 (dihydrolipoamide dehydrogenase); the complex contains multiple copies of the three enzymatic components (E1, E2 and E3). Requires (R)-lipoate as cofactor.

The catalysed reaction is N(6)-[(R)-dihydrolipoyl]-L-lysyl-[protein] + succinyl-CoA = N(6)-[(R)-S(8)-succinyldihydrolipoyl]-L-lysyl-[protein] + CoA. The protein operates within amino-acid degradation; L-lysine degradation via saccharopine pathway; glutaryl-CoA from L-lysine: step 6/6. E2 component of the 2-oxoglutarate dehydrogenase (OGDH) complex which catalyzes the second step in the conversion of 2-oxoglutarate to succinyl-CoA and CO(2). The polypeptide is Dihydrolipoyllysine-residue succinyltransferase component of 2-oxoglutarate dehydrogenase complex (odhB) (Staphylococcus epidermidis (strain ATCC 35984 / DSM 28319 / BCRC 17069 / CCUG 31568 / BM 3577 / RP62A)).